A 409-amino-acid chain; its full sequence is Tryptophan synthase beta chain (409 aa).

An N6-(pyridoxal phosphate)lysine modification is found at Lys-100.

This sequence belongs to the TrpB family. In terms of assembly, tetramer of two alpha and two beta chains. It depends on pyridoxal 5'-phosphate as a cofactor.

The enzyme catalyses (1S,2R)-1-C-(indol-3-yl)glycerol 3-phosphate + L-serine = D-glyceraldehyde 3-phosphate + L-tryptophan + H2O. The protein operates within amino-acid biosynthesis; L-tryptophan biosynthesis; L-tryptophan from chorismate: step 5/5. Functionally, the beta subunit is responsible for the synthesis of L-tryptophan from indole and L-serine. This is Tryptophan synthase beta chain from Pyrobaculum arsenaticum (strain DSM 13514 / JCM 11321 / PZ6).